The primary structure comprises 306 residues: Protein YIPF1 (306 aa).

The Cytoplasmic portion of the chain corresponds to 1–119 (MAAVDDLQFE…VRLYIRSNPD (119 aa)). The interval 33–59 (PSVSFKHQPRPPGSLGREEDEELLGTN) is disordered. Residues 50 to 59 (EEDEELLGTN) show a composition bias toward acidic residues. A helical transmembrane segment spans residues 120-140 (LYGPFWICATLVFAIAISGNL). At 141 to 162 (SNFLIHLGEKTYHYVPEFQKVS) the chain is on the lumenal side. The chain crosses the membrane as a helical span at residues 163 to 183 (IAATVIYAYAWLVPLALWGFL). The Cytoplasmic portion of the chain corresponds to 184–200 (LWRNSKVMNIVSYSFLE). Residues 201 to 221 (IVCVYGYSLFIYIPTAVLWII) traverse the membrane as a helical segment. The Lumenal portion of the chain corresponds to 222–227 (PQRVIR). Residues 228-248 (WVLVTIALGISGSVLAMTFWP) form a helical membrane-spanning segment. Topologically, residues 249–256 (AVREDNRR) are cytoplasmic. The helical transmembrane segment at 257–277 (VALATIVTIMLLHVLLSVGCL) threads the bilayer. Residues 278–306 (AYFFDAPEMDHLPAAITTPNQTVAAAKSS) lie on the Lumenal side of the membrane. Asn-297 is a glycosylation site (N-linked (GlcNAc...) asparagine).

It belongs to the YIP1 family. As to quaternary structure, interacts with YIPF6; this interaction may stabilize YIPF1. May also form a ternary complex with YIPF2 and YIPF6.

The protein localises to the golgi apparatus. Its subcellular location is the cis-Golgi network membrane. It localises to the trans-Golgi network membrane. The protein resides in the late endosome membrane. The sequence is that of Protein YIPF1 (Yipf1) from Rattus norvegicus (Rat).